The chain runs to 53 residues: UPF0391 membrane protein YPDSF_3201 (53 aa).

The next 2 helical transmembrane spans lie at 4-24 (WGIIFLIIALIEAALGFGGLA) and 27-47 (AAWAAKVVFVVGIILFLISLF).

The protein belongs to the UPF0391 family.

It localises to the cell membrane. In Yersinia pestis (strain Pestoides F), this protein is UPF0391 membrane protein YPDSF_3201.